A 408-amino-acid polypeptide reads, in one-letter code: Neutral cholesterol ester hydrolase 1 (408 aa).

At 1–4 the chain is on the cytoplasmic side; the sequence is MRSS. The chain crosses the membrane as a helical; Signal-anchor for type II membrane protein span at residues 5–25; the sequence is CVLLAALLALAAYYVYIPLPS. Topologically, residues 26–408 are lumenal; that stretch reads AVSDPWKLML…SYIKWLDQNL (383 aa). An Involved in the stabilization of the negatively charged intermediate by the formation of the oxyanion hole motif is present at residues 113–115; it reads HGG. The active site involves S191. The N-linked (GlcNAc...) asparagine glycan is linked to N270. Residue D348 is part of the active site. An N-linked (GlcNAc...) asparagine glycan is attached at N367. H378 is a catalytic residue. A glycan (N-linked (GlcNAc...) asparagine) is linked at N389.

It belongs to the 'GDXG' lipolytic enzyme family. N-glycosylated. In terms of tissue distribution, present in brain, heart, kidney, lung, spinal cord and testis but not liver (at protein level). Expressed in peritoneal macrophages and kidney.

The protein localises to the cell membrane. Its subcellular location is the microsome. It catalyses the reaction a 1-O-alkyl-2-acetyl-sn-glycerol + H2O = a 1-O-alkyl-sn-glycerol + acetate + H(+). It carries out the reaction 1-O-hexadecyl-2-acetyl-sn-glycerol + H2O = 1-O-hexadecyl-sn-glycerol + acetate + H(+). The catalysed reaction is a cholesterol ester + H2O = cholesterol + a fatty acid + H(+). The enzyme catalyses cholesteryl (9Z-octadecenoate) + H2O = cholesterol + (9Z)-octadecenoate + H(+). With respect to regulation, inhibited by bulky trifluoromethyl ketones. Its function is as follows. Hydrolyzes 2-acetyl monoalkylglycerol ether (1-O-alkyl-2-acetyl-sn-glycerol), the penultimate precursor of the pathway for de novo synthesis of platelet-activating factor. May be responsible for the hydrolysis of cholesterol esters (such as cholesteryl (9Z-octadecenoate)) in macrophages. Also involved in organ detoxification by hydrolyzing exogenous organophosphorus compounds. The polypeptide is Neutral cholesterol ester hydrolase 1 (Nceh1) (Mus musculus (Mouse)).